The sequence spans 403 residues: LIM/homeobox protein Lhx1 (403 aa).

LIM zinc-binding domains lie at 4–54 and 63–117; these read CAGC…CKND and CAGC…CKED. Positions 131 to 147 are enriched in polar residues; the sequence is ISVTGSDPSLSPESQDP. Disordered regions lie at residues 131–185 and 318–366; these read ISVT…PRTT and PAGT…SMHS. A compositionally biased stretch (basic and acidic residues) spans 150–166; sequence DDAKDSESANVSDKEAG. The homeobox DNA-binding region spans 179–238; the sequence is RRGPRTTIKAKQLETLKAAFAATPKPTRHIREQLAQETGLNMRVIQVWFQNRRSKERRMK.

As to quaternary structure, interacts with ldb1 via the tandem LIM domains. Both LIM domains are required for optimal binding and binding relieves the inhibitory effect of the LIM domains and activates lhx1. Binding to ldb1 also prevents degradation of ldb1 by rnf12. The stoichiometry of lhx1 and ldb1 is important for their function and an excess of ldb1 can inhibit lhx1 function. Interacts with the N-terminal region of rnf12 by a homeobox-dependent mechanism. In terms of tissue distribution, exhibits a biphasic expression pattern. Initially localized to the Spemann organizer region of gastrulae, leading to expression in prechordal mesoderm and notochord. In the second phase, expressed in the lateral mesoderm and neural plate, eventually concentrating in the pronephros and the CNS. Expressed in the pronephros primordium by late gastrula (stage 12.5) and becomes restricted to the tips of the tubules and ducts as kidney development progresses. In the CNS, becomes progressively recognizable in anatomically distinct structures during larval development. Within the forebrain, shows almost identical expression to lhx5 in the diencephalon, being expressed in alternating stripes to lhx2 and lhx9. Expressed in the diencephalic pretectum within prosomere 1, hypothalamus, ventral thalamus and zona limitans intrathalamica. In the telencephalon, the expression pattern is distinct from lhx5, being localized in the pallium and subpallium. Also expressed in the ventral territories of midbrain (mesencephalon) and hindbrain (rhombencephalon), being expressed in the mesencephalic tegmentum and hindbrain reticular formation. Also shows intense expression in the cerebellum including Purkinje cells.

It is found in the nucleus. Involved in the establishment of the body plan via the Spemann organizer during gastrulation. Transcriptional activator required to induce organizer gene expression downstream of siamois. Promotes head formation by binding to 5'-TAAT'-3' elements in the promoters of head organizer genes cer1 and gsc to stimulate expression. Binds as a complex with siamois and mix-A/mix.1 to the cer1 promoter, and with ldb1 and otx2 to the gsc promoter. Also involved in neural induction via the organizer, including a role in notochord formation. Acts synergistically with ldb1 and ssbp in subsequent axis formation. Involved in kidney development, acting synergistically with pax8 to establish the pronephric primordium in late gastrulae/early neurulae and with pax2 during pronephric morphogenesis in tailbud stages. Has a later role in mediating the activity of inhibitors of ventralization. The chain is LIM/homeobox protein Lhx1 (lhx1) from Xenopus laevis (African clawed frog).